Here is a 75-residue protein sequence, read N- to C-terminus: Theromacin (75 aa).

5 disulfides stabilise this stretch: Cys-2–Cys-9, Cys-24–Cys-28, Cys-31–Cys-73, Cys-39–Cys-47, and Cys-57–Cys-59.

The protein belongs to the macin family.

It localises to the secreted. In terms of biological role, has a bactericial activity. This is Theromacin from Hirudo medicinalis (Medicinal leech).